A 201-amino-acid polypeptide reads, in one-letter code: Imidazole glycerol phosphate synthase subunit HisH (201 aa).

A Glutamine amidotransferase type-1 domain is found at 1–201 (MVFIADYGAG…LKVLANFAEL (201 aa)). Cysteine 79 serves as the catalytic Nucleophile. Catalysis depends on residues histidine 183 and glutamate 185.

In terms of assembly, heterodimer of HisH and HisF.

It localises to the cytoplasm. It carries out the reaction 5-[(5-phospho-1-deoxy-D-ribulos-1-ylimino)methylamino]-1-(5-phospho-beta-D-ribosyl)imidazole-4-carboxamide + L-glutamine = D-erythro-1-(imidazol-4-yl)glycerol 3-phosphate + 5-amino-1-(5-phospho-beta-D-ribosyl)imidazole-4-carboxamide + L-glutamate + H(+). The catalysed reaction is L-glutamine + H2O = L-glutamate + NH4(+). Its pathway is amino-acid biosynthesis; L-histidine biosynthesis; L-histidine from 5-phospho-alpha-D-ribose 1-diphosphate: step 5/9. IGPS catalyzes the conversion of PRFAR and glutamine to IGP, AICAR and glutamate. The HisH subunit catalyzes the hydrolysis of glutamine to glutamate and ammonia as part of the synthesis of IGP and AICAR. The resulting ammonia molecule is channeled to the active site of HisF. This is Imidazole glycerol phosphate synthase subunit HisH from Chlorobium chlorochromatii (strain CaD3).